The primary structure comprises 373 residues: Glutamate 5-kinase (373 aa).

Position 15 (K15) interacts with ATP. 3 residues coordinate substrate: S55, D142, and N154. 174–175 (TD) serves as a coordination point for ATP. The region spanning 281–359 (RGSVVLDDGA…SQIEAVLGYV (79 aa)) is the PUA domain.

It belongs to the glutamate 5-kinase family.

The protein localises to the cytoplasm. It carries out the reaction L-glutamate + ATP = L-glutamyl 5-phosphate + ADP. It participates in amino-acid biosynthesis; L-proline biosynthesis; L-glutamate 5-semialdehyde from L-glutamate: step 1/2. Its function is as follows. Catalyzes the transfer of a phosphate group to glutamate to form L-glutamate 5-phosphate. This Nitrosomonas eutropha (strain DSM 101675 / C91 / Nm57) protein is Glutamate 5-kinase.